The chain runs to 403 residues: Major capsid protein (403 aa).

Its subcellular location is the virion. In terms of biological role, assembles to form an icosahedral capsid. The chain is Major capsid protein from Staphylococcus aureus.